Here is a 98-residue protein sequence, read N- to C-terminus: MSRNELDERIETYYVRVRGVVQGVGFRHATVREAHALKLRGWVANLEDGTVEAMIQGSGAQIDRMLAWLRHGPPAARVTEVTFEERQTERRFERFQQQ.

The region spanning 12 to 98 (TYYVRVRGVV…ERRFERFQQQ (87 aa)) is the Acylphosphatase-like domain. Active-site residues include R27 and N45.

Belongs to the acylphosphatase family.

The catalysed reaction is an acyl phosphate + H2O = a carboxylate + phosphate + H(+). This Burkholderia lata (strain ATCC 17760 / DSM 23089 / LMG 22485 / NCIMB 9086 / R18194 / 383) protein is Acylphosphatase (acyP).